A 1247-amino-acid polypeptide reads, in one-letter code: Respiratory nitrate reductase 1 alpha chain (1247 aa).

Positions 43–107 (DKIVRSTHGV…SYSWYLYSAN (65 aa)) constitute a 4Fe-4S Mo/W bis-MGD-type domain. Positions 50, 54, 58, and 93 each coordinate [4Fe-4S] cluster. D223 contacts Mo-bis(molybdopterin guanine dinucleotide).

Belongs to the prokaryotic molybdopterin-containing oxidoreductase family. In terms of assembly, dimer of heterotrimers each composed of an alpha, a beta and a gamma chain. Alpha and beta are catalytic chains; gamma chains are involved in binding the enzyme complex to the cytoplasmic membrane. Interacts with the NarJ chaperone. [4Fe-4S] cluster serves as cofactor. The cofactor is Mo-bis(molybdopterin guanine dinucleotide).

It localises to the cell membrane. It carries out the reaction nitrate + a quinol = a quinone + nitrite + H2O. Its function is as follows. The nitrate reductase enzyme complex allows E.coli to use nitrate as an electron acceptor during anaerobic growth. The alpha chain is the actual site of nitrate reduction. In Escherichia coli (strain K12), this protein is Respiratory nitrate reductase 1 alpha chain (narG).